A 205-amino-acid polypeptide reads, in one-letter code: Holliday junction branch migration complex subunit RuvA (205 aa).

Residues 1–64 are domain I; it reads MIGRLRGIIL…EDAQLLYGFN (64 aa). Positions 65–143 are domain II; the sequence is DKQERALFRE…GLNGDLFNNT (79 aa). A flexible linker region spans residues 144-156; it reads GDIQLPASNSSQI. The interval 157–205 is domain III; sequence SDADIEAEAASALVALGYKPQEASRLVSKIAKPGADCETLIRDALRAAL.

This sequence belongs to the RuvA family. Homotetramer. Forms an RuvA(8)-RuvB(12)-Holliday junction (HJ) complex. HJ DNA is sandwiched between 2 RuvA tetramers; dsDNA enters through RuvA and exits via RuvB. An RuvB hexamer assembles on each DNA strand where it exits the tetramer. Each RuvB hexamer is contacted by two RuvA subunits (via domain III) on 2 adjacent RuvB subunits; this complex drives branch migration. In the full resolvosome a probable DNA-RuvA(4)-RuvB(12)-RuvC(2) complex forms which resolves the HJ.

It is found in the cytoplasm. Functionally, the RuvA-RuvB-RuvC complex processes Holliday junction (HJ) DNA during genetic recombination and DNA repair, while the RuvA-RuvB complex plays an important role in the rescue of blocked DNA replication forks via replication fork reversal (RFR). RuvA specifically binds to HJ cruciform DNA, conferring on it an open structure. The RuvB hexamer acts as an ATP-dependent pump, pulling dsDNA into and through the RuvAB complex. HJ branch migration allows RuvC to scan DNA until it finds its consensus sequence, where it cleaves and resolves the cruciform DNA. The polypeptide is Holliday junction branch migration complex subunit RuvA (Yersinia enterocolitica serotype O:8 / biotype 1B (strain NCTC 13174 / 8081)).